A 323-amino-acid chain; its full sequence is tRNA U34 carboxymethyltransferase (323 aa).

Residues Lys-91, Trp-105, Lys-110, Gly-130, 152–154 (DPT), 181–182 (IE), Met-196, Tyr-200, and Arg-315 each bind carboxy-S-adenosyl-L-methionine.

It belongs to the class I-like SAM-binding methyltransferase superfamily. CmoB family. Homotetramer.

The catalysed reaction is carboxy-S-adenosyl-L-methionine + 5-hydroxyuridine(34) in tRNA = 5-carboxymethoxyuridine(34) in tRNA + S-adenosyl-L-homocysteine + H(+). In terms of biological role, catalyzes carboxymethyl transfer from carboxy-S-adenosyl-L-methionine (Cx-SAM) to 5-hydroxyuridine (ho5U) to form 5-carboxymethoxyuridine (cmo5U) at position 34 in tRNAs. This Salmonella paratyphi A (strain ATCC 9150 / SARB42) protein is tRNA U34 carboxymethyltransferase.